Reading from the N-terminus, the 308-residue chain is Probable manganese-dependent inorganic pyrophosphatase (308 aa).

Histidine 9, aspartate 13, aspartate 15, aspartate 75, histidine 97, and aspartate 149 together coordinate Mn(2+).

It belongs to the PPase class C family. The cofactor is Mn(2+).

It is found in the cytoplasm. It carries out the reaction diphosphate + H2O = 2 phosphate + H(+). This Listeria monocytogenes serotype 4b (strain CLIP80459) protein is Probable manganese-dependent inorganic pyrophosphatase.